The following is a 231-amino-acid chain: MTQDELKQLVGQAAADYVNATVPEGAVIGVGTGSTANCFIDALAGNKARYRGAVSSSLATTARLQTHGIKVFDLNEIDSLPVYVDGADEIDRSGAMIKGGGGALTREKIVASVSDVFVCIADASKLVETLGTFPLPIEVVPMARTAIGRRVTALGGVPVVRVTKEGVPFITDNGNEIIDVKGLRISDPRTLETHINAWPGVVTVGLFAARGANLCLLGTDTGVETIEYSKG.

Residues 32 to 35, 85 to 88, and 98 to 101 each bind substrate; these read TGST, DGAD, and KGGG. Glu107 acts as the Proton acceptor in catalysis. Lys125 is a substrate binding site.

This sequence belongs to the ribose 5-phosphate isomerase family. In terms of assembly, homodimer.

The catalysed reaction is aldehydo-D-ribose 5-phosphate = D-ribulose 5-phosphate. Its pathway is carbohydrate degradation; pentose phosphate pathway; D-ribose 5-phosphate from D-ribulose 5-phosphate (non-oxidative stage): step 1/1. Catalyzes the reversible conversion of ribose-5-phosphate to ribulose 5-phosphate. The polypeptide is Ribose-5-phosphate isomerase A (Paraburkholderia phytofirmans (strain DSM 17436 / LMG 22146 / PsJN) (Burkholderia phytofirmans)).